The chain runs to 297 residues: N-acetylmannosamine kinase (297 aa).

ATP-binding positions include 5–12 (ALDIGGTK) and 132–139 (GVGGGIIL). Residues His156, Cys166, Cys168, and Cys173 each contribute to the Zn(2+) site.

This sequence belongs to the ROK (NagC/XylR) family. NanK subfamily. Homodimer.

It catalyses the reaction an N-acyl-D-mannosamine + ATP = an N-acyl-D-mannosamine 6-phosphate + ADP + H(+). It functions in the pathway amino-sugar metabolism; N-acetylneuraminate degradation; D-fructose 6-phosphate from N-acetylneuraminate: step 2/5. In terms of biological role, catalyzes the phosphorylation of N-acetylmannosamine (ManNAc) to ManNAc-6-P. In Pasteurella multocida (strain Pm70), this protein is N-acetylmannosamine kinase.